The primary structure comprises 140 residues: Putative peptidyl-tRNA hydrolase PTRHD1 (140 aa).

This sequence belongs to the PTH2 family. PTRHD1 subfamily.

It carries out the reaction an N-acyl-L-alpha-aminoacyl-tRNA + H2O = an N-acyl-L-amino acid + a tRNA + H(+). In terms of biological role, as a putative peptidyl-tRNA hydrolase, it might be involved in releasing tRNAs from the ribosome during protein synthesis. Some evidence, however, suggests that it lacks peptidyl-tRNA hydrolase activity. The protein is Putative peptidyl-tRNA hydrolase PTRHD1 (PTRHD1) of Homo sapiens (Human).